We begin with the raw amino-acid sequence, 596 residues long: Fc receptor-like protein 5 (596 aa).

A signal peptide spans 1 to 26 (MSGSFSPCVVFTQMWLTLLVVTPVNG). Residues 27-496 (QHEAAQQSVV…MTKNRSVPMA (470 aa)) are Extracellular-facing. 5 consecutive Ig-like C2-type domains span residues 34–115 (SVVS…VEFS), 106–199 (PSMH…NTVV), 207–294 (PRPV…TAFI), 296–384 (PVQR…SFVS), and 398–483 (PVLT…IRIS). Cystine bridges form between C55–C99, C137–C181, and C228–C277. N-linked (GlcNAc...) asparagine glycosylation is present at N324. Intrachain disulfides connect C325–C373 and C419–C466. Residue N436 is glycosylated (N-linked (GlcNAc...) asparagine). A helical transmembrane segment spans residues 497 to 517 (AGITVGLLIMAVGVFLFYCWF). The Cytoplasmic segment spans residues 518 to 596 (SRKAGGKPTS…RSRCQMAEKK (79 aa)). 2 disordered regions span residues 522–544 (GGKP…PTYY) and 561–596 (EENV…AEKK). The span at 577 to 596 (KHADQESESPRSRCQMAEKK) shows a compositional bias: basic and acidic residues.

In terms of assembly, interacts with CR2. Interacts with CD19. Phosphorylated on cytoplasmic tyrosines; required for interaction with protein tyrosine phosphatases and protein tyrosine kinases. Preferentially expressed in marginal zone B cells.

The protein localises to the cell membrane. Functionally, plays an important role in B-cell response to antigen that acts both as a negative or positive coreceptor. Inhibits B-cell receptor (BCR) signaling in the absence of CR2 stimulation but engagement with CR2 and the BCR lead to a superior calcium response compared to CR2 and BCR costimulation. May be involved in B-cell development and differentiation in peripheral lymphoid organs and may be useful markers of B-cell stages. May have an immunoregulatory role in marginal zone B-cells. May play a role in fertilization. The chain is Fc receptor-like protein 5 (Fcrl5) from Mus musculus (Mouse).